The sequence spans 201 residues: Superoxide dismutase [Mn] (201 aa).

Mn(2+)-binding residues include His-27, His-81, Asp-163, and His-167.

The protein belongs to the iron/manganese superoxide dismutase family. As to quaternary structure, homodimer. Requires Mn(2+) as cofactor.

The protein localises to the secreted. It catalyses the reaction 2 superoxide + 2 H(+) = H2O2 + O2. Its function is as follows. Destroys superoxide anion radicals which are normally produced within the cells and which are toxic to biological systems. In Streptococcus pyogenes serotype M3 (strain ATCC BAA-595 / MGAS315), this protein is Superoxide dismutase [Mn] (sodA).